We begin with the raw amino-acid sequence, 591 residues long: Complement component C8 beta chain (591 aa).

Residues 1-32 form the signal peptide; sequence MKNSRTWAWRAPVELFLLCAALGCLSLPGSRG. Residues 33 to 54 constitute a propeptide that is removed on maturation; the sequence is ERPHSFGSNAVNKSFAKSRQMR. A TSP type-1 1 domain is found at 64–117; sequence DCELSSWSSWTTCDPCQKKRYRYAYLLQPSQFHGEPCNFSDKEVEDCVTNRPCG. 7 disulfides stabilise this stretch: Cys-65–Cys-100, Cys-76–Cys-110, Cys-79–Cys-116, Cys-122–Cys-133, Cys-127–Cys-146, Cys-140–Cys-155, and Cys-162–Cys-200. C-linked (Man) tryptophan glycans are attached at residues Trp-70 and Trp-73. N-linked (GlcNAc...) asparagine glycosylation is present at Asn-101. The region spanning 120 to 157 is the LDL-receptor class A domain; it reads VRCEGFVCAQTGRCVNRRLLCNGDNDCGDQSDEANCRR. Ca(2+) is bound by residues Leu-138, Asn-141, Asp-143, Asp-145, Asp-151, and Glu-152. Residues 158–504 enclose the MACPF domain; the sequence is IYKKCQHEMD…EFQKEVSSCH (347 aa). Residue Asn-243 is glycosylated (N-linked (GlcNAc...) asparagine). 4 beta stranded membrane-spanning segments follow: residues 252-259, 262-269, 379-386, and 392-399; these read SGFSFGFK, GIFELGIS, AKNDFKIG, and VYVSLGVS. The cysteines at positions 378 and 403 are disulfide-linked. A Phosphothreonine modification is found at Thr-418. 4 cysteine pairs are disulfide-bonded: Cys-503–Cys-550, Cys-505–Cys-521, Cys-508–Cys-523, and Cys-525–Cys-534. An EGF-like domain is found at 505–535; it reads CAPCQGNGVPVLKGSRCDCICPVGSQGLACE. Residues 545–591 form the TSP type-1 2 domain; sequence DGKWNCWSNWSSCSGRRKTRQRQCNNPPPQNGGSPCSGPASETLDCS. Trp-551 and Trp-554 each carry a C-linked (Man) tryptophan glycan. The cysteines at positions 557 and 590 are disulfide-linked. The tract at residues 568–591 is disordered; it reads CNNPPPQNGGSPCSGPASETLDCS.

Belongs to the complement C6/C7/C8/C9 family. Heterotrimer of 3 chains: alpha (C8A), beta (C8B) and gamma (C8G); the alpha and gamma chains are disulfide bonded. Component of the membrane attack complex (MAC), composed of complement C5b, C6, C7, C8A, C8B, C8G and multiple copies of the pore-forming subunit C9. Post-translationally, N-glycosylated; contains one or two bound glycans. Not O-glycosylated.

The protein resides in the secreted. It localises to the target cell membrane. Membrane attack complex (MAC) assembly is inhibited by CD59, thereby protecting self-cells from damage during complement activation. CD59 acts by binding to the beta-haipins of C8 (C8A and C8B), forming an intermolecular beta-sheet that prevents incorporation of the multiple copies of C9 required for complete formation of the osmolytic pore. MAC assembly is also inhibited by clusterin (CLU) chaperones that inhibit polymerization of C9. Its function is as follows. Component of the membrane attack complex (MAC), a multiprotein complex activated by the complement cascade, which inserts into a target cell membrane and forms a pore, leading to target cell membrane rupture and cell lysis. The MAC is initiated by proteolytic cleavage of C5 into complement C5b in response to the classical, alternative, lectin and GZMK complement pathways. The complement pathways consist in a cascade of proteins that leads to phagocytosis and breakdown of pathogens and signaling that strengthens the adaptive immune system. C8B, together with C8A and C8G, inserts into the target membrane, but does not form pores by itself. During MAC assembly, associates with C5b, C6 and C7 to form the C5b8 intermediate complex that inserts into the target membrane and traverses the bilayer increasing membrane rigidity. The chain is Complement component C8 beta chain from Homo sapiens (Human).